The sequence spans 155 residues: DNA-directed RNA polymerases I, II, and III subunit RPABC2 (155 aa).

Positions 1–19 (MSDYEEAFNDGNENFEDFD) are enriched in acidic residues. The tract at residues 1–57 (MSDYEEAFNDGNENFEDFDVEHFSDEETYEEKPQFKDGETTDANGKTIVTGGNGPED) is disordered. The segment covering 20 to 39 (VEHFSDEETYEEKPQFKDGE) has biased composition (basic and acidic residues). Serine 24 is subject to Phosphoserine. The interval 111–132 (LEGETDPLRIAMKELAEKKIPL) is leucine-zipper.

This sequence belongs to the archaeal Rpo6/eukaryotic RPB6 RNA polymerase subunit family. As to quaternary structure, component of the RNA polymerase I (Pol I), RNA polymerase II (Pol II) and RNA polymerase III (Pol III) complexes. Component of the RNA polymerase I (Pol I) complex consisting of 14 subunits: RPA135, RPA190, RPC40, RPA14, RPB5, RPO26, RPA43, RPB8, RPA12, RPB10, RPC19, RPC10, RPA49 and RPA34. The complex is composed of a horseshoe-shaped core containing ten subunits (RPA135, RPA190, RPB5, RPO26, RPB8, RPB10, RPC10, RPA12, RPC19 and RPC40) where RPA135 and RPA190 form the DNA-binding cleft. Outside of the core, RPA14 and RPA43 form the stalk that mediates interactions with transcription initiation factors and newly synthesized RNA. Component of the RNA polymerase II (Pol II) complex consisting of 12 subunits: RPO21, RPB2, RPB3, RPB4, RPB5, RPO26, RPB7, RPB8, RPB9, RPB10 and RPC10. Component of the RNA polymerase III (Pol III) complex consisting of 17 subunits.

It is found in the cytoplasm. Its subcellular location is the nucleus. In terms of biological role, DNA-dependent RNA polymerases catalyze the transcription of DNA into RNA using the four ribonucleoside triphosphates as substrates. Common component of RNA polymerases I, II and III which synthesize ribosomal RNA precursors, mRNA precursors and many functional non-coding RNAs, and small RNAs, such as 5S rRNA and tRNAs, respectively. Pol II is the central component of the basal RNA polymerase II transcription machinery. RNA polymerases are composed of mobile elements that move relative to each other. In Pol II, RPB6 is part of the clamp element and together with parts of RPB1 and RPB2 forms a pocket to which the RPB4-RPB7 subcomplex binds. This Saccharomyces cerevisiae (strain ATCC 204508 / S288c) (Baker's yeast) protein is DNA-directed RNA polymerases I, II, and III subunit RPABC2 (RPO26).